Here is a 491-residue protein sequence, read N- to C-terminus: MKTIVALGLLALATAASGQFLQDCTNALDGLYAIGNCESQFLTCSGGIARIMDCPADLIYNEPLLICDWRHNVVGCEGSGEASGEQSGEGSGEASGEGSGEASGEGSGEASGEGSGSGEGSGEENNVCEGLEDGAYSSGGCTTYYFFCTDNTARFLSCPTPLFYDVATQKCAWKALVEECNGEIIIDGSGETSGEGSGEASGENSGENSGEGSGEFEPTCDGKADGIYPNGVCVPNFLTCSGGIARVMNCPASLIFNPDILVCDWPRDVAECHGLSTPAPVCEDDGYFSFGQCSSSFTACTNGRAIVMFCPAGLKFSQANQRCDYDDLVNECQEASGEESSGEASGEQSGEGSGEASGEASGEASGENECVSLDNGLHAIGCSPRVLSCQNGHVDIFECPSSLVFNEQTLICDYPQTSLKCLIEDTLLIDETPITPFDCSTNGLFSDGLCSATYHQCSAGQLINFTCAETNAVFSAANAECVDSSTLLQCH.

An N-terminal signal peptide occupies residues 1-18; that stretch reads MKTIVALGLLALATAASG. The Chitin-binding type-2 1 domain occupies 21-78; it reads LQDCTNALDGLYAIGNCESQFLTCSGGIARIMDCPADLIYNEPLLICDWRHNVVGCEG. A disulfide bridge links Cys-54 with Cys-67. The tract at residues 80–126 is disordered; it reads GEASGEQSGEGSGEASGEGSGEASGEGSGEASGEGSGSGEGSGEENN. A compositionally biased stretch (gly residues) spans 87–120; sequence SGEGSGEASGEGSGEASGEGSGEASGEGSGSGEG. Residues 125–182 form the Chitin-binding type-2 2 domain; that stretch reads NNVCEGLEDGAYSSGGCTTYYFFCTDNTARFLSCPTPLFYDVATQKCAWKALVEECNG. A disulfide bridge connects residues Cys-158 and Cys-171. Positions 187 to 217 are disordered; that stretch reads DGSGETSGEGSGEASGENSGENSGEGSGEFE. O-linked (Xyl...) (chondroitin sulfate) serine glycosylation is found at Ser-197 and Ser-201. The segment covering 200–210 has biased composition (low complexity); that stretch reads ASGENSGENSG. Chitin-binding type-2 domains follow at residues 217–274, 279–334, 367–423, and 436–491; these read EPTC…ECHG, APVC…ECQE, ENEC…KCLI, and PFDC…LQCH. 2 disulfide bridges follow: Cys-250-Cys-263 and Cys-310-Cys-323. The tract at residues 336–367 is disordered; the sequence is SGEESSGEASGEQSGEGSGEASGEASGEASGE. Low complexity predominate over residues 356–367; sequence ASGEASGEASGE. Residues Cys-399 and Cys-412 are joined by a disulfide bond. Asn-464 is a glycosylation site (N-linked (GlcNAc...) asparagine). The cysteines at positions 467 and 481 are disulfide-linked.

Functionally, required for polar body extrusion during cytokinesis in embryo development. Affects cortical granule size. Shown to have roles in meiotic chromosome segregation, osmotic barrier function and polarization in conjunction with cpg-2. Binds chitin. The polypeptide is Chondroitin proteoglycan 2 (Caenorhabditis briggsae).